The primary structure comprises 182 residues: Autophagy-related protein 31 (182 aa).

A disordered region spans residues 105–134 (LTSGNDTGGDAGKKSGDISDPAAGPDVPRE).

Its subcellular location is the cytoplasm. It is found in the cytoskeleton. The protein resides in the preautophagosomal structure. Functionally, plays a role in starvation-induced autophagy. Involved in mitophagy. Functions with ATG17 and ATG29 at the preautophagosomal structure (PAS) in order to form normal autophagosomes under starvation conditions. May be involved in microtubule function, such as chromosome segregation and karyogamy. The sequence is that of Autophagy-related protein 31 (CIS1) from Candida glabrata (strain ATCC 2001 / BCRC 20586 / JCM 3761 / NBRC 0622 / NRRL Y-65 / CBS 138) (Yeast).